Reading from the N-terminus, the 456-residue chain is Anthranilate synthase component 1 (456 aa).

L-tryptophan is bound by residues Ser-31 and 244 to 246 (SYM). Residue 279-280 (GT) participates in chorismate binding. Glu-306 is a Mg(2+) binding site. Chorismate is bound by residues Tyr-394, Arg-414, 428 to 430 (GAG), and Gly-430. Glu-443 serves as a coordination point for Mg(2+).

This sequence belongs to the anthranilate synthase component I family. As to quaternary structure, heterotetramer consisting of two non-identical subunits: a beta subunit (TrpG) and a large alpha subunit (TrpE). The cofactor is Mg(2+).

It catalyses the reaction chorismate + L-glutamine = anthranilate + pyruvate + L-glutamate + H(+). It participates in amino-acid biosynthesis; L-tryptophan biosynthesis; L-tryptophan from chorismate: step 1/5. Feedback inhibited by tryptophan. In terms of biological role, part of a heterotetrameric complex that catalyzes the two-step biosynthesis of anthranilate, an intermediate in the biosynthesis of L-tryptophan. In the first step, the glutamine-binding beta subunit (TrpG) of anthranilate synthase (AS) provides the glutamine amidotransferase activity which generates ammonia as a substrate that, along with chorismate, is used in the second step, catalyzed by the large alpha subunit of AS (TrpE) to produce anthranilate. In the absence of TrpG, TrpE can synthesize anthranilate directly from chorismate and high concentrations of ammonia. This Lactococcus lactis subsp. lactis (strain IL1403) (Streptococcus lactis) protein is Anthranilate synthase component 1 (trpE).